Consider the following 114-residue polypeptide: MNVLLGGFVIFATFVTLCNASCSFMPNERFPGDSTRECTDLKGNKHPINSKWQTDNCEACTCYETEIICCTLIATPVGYDKNKCQRIFKKEECKYIVVEKKNPKKTCPIDQWIL.

The signal sequence occupies residues 1–20 (MNVLLGGFVIFATFVTLCNA). 5 cysteine pairs are disulfide-bonded: C22/C70, C38/C62, C57/C93, C60/C69, and C84/C107.

It belongs to the beta-microseminoprotein family. As to quaternary structure, homodimer; Interacts with PI16.

Its subcellular location is the secreted. This is Beta-microseminoprotein (MSMB) from Papio anubis (Olive baboon).